Consider the following 121-residue polypeptide: Small ribosomal subunit protein uS13 (121 aa).

A disordered region spans residues 91-121 (HKRGLPVRGQRTRTNARTRKGPRRAAASLKK).

The protein belongs to the universal ribosomal protein uS13 family. Part of the 30S ribosomal subunit. Forms a loose heterodimer with protein S19. Forms two bridges to the 50S subunit in the 70S ribosome.

In terms of biological role, located at the top of the head of the 30S subunit, it contacts several helices of the 16S rRNA. In the 70S ribosome it contacts the 23S rRNA (bridge B1a) and protein L5 of the 50S subunit (bridge B1b), connecting the 2 subunits; these bridges are implicated in subunit movement. Contacts the tRNAs in the A and P-sites. This is Small ribosomal subunit protein uS13 from Bordetella avium (strain 197N).